Consider the following 89-residue polypeptide: Small ribosomal subunit protein uS15 (89 aa).

It belongs to the universal ribosomal protein uS15 family. As to quaternary structure, part of the 30S ribosomal subunit. Forms a bridge to the 50S subunit in the 70S ribosome, contacting the 23S rRNA.

One of the primary rRNA binding proteins, it binds directly to 16S rRNA where it helps nucleate assembly of the platform of the 30S subunit by binding and bridging several RNA helices of the 16S rRNA. Functionally, forms an intersubunit bridge (bridge B4) with the 23S rRNA of the 50S subunit in the ribosome. This chain is Small ribosomal subunit protein uS15, found in Vibrio atlanticus (strain LGP32) (Vibrio splendidus (strain Mel32)).